A 542-amino-acid chain; its full sequence is Isocitrate lyase (542 aa).

Residue 102 to 104 (SGW) coordinates substrate. Residue aspartate 170 coordinates Mg(2+). Cysteine 208 acts as the Proton acceptor in catalysis. Residues 209-210 (GH), arginine 245, 428-432 (NLSPS), and threonine 462 contribute to the substrate site.

This sequence belongs to the isocitrate lyase/PEP mutase superfamily. Isocitrate lyase family. In terms of assembly, homotetramer. The cofactor is Mg(2+).

The protein localises to the glyoxysome. It carries out the reaction D-threo-isocitrate = glyoxylate + succinate. It catalyses the reaction (2S,3R)-3-hydroxybutane-1,2,3-tricarboxylate = pyruvate + succinate. It functions in the pathway carbohydrate metabolism; glyoxylate cycle; (S)-malate from isocitrate: step 1/2. Catalyzes the formation of succinate and glyoxylate from isocitrate, a key step of the glyoxylate cycle, which operates as an anaplerotic route for replenishing the tricarboxylic acid cycle. Required for growth on ethanol or acetate, but dispensable when fermentable carbon sources are available. Also acts on 2-methylisocitrate. The sequence is that of Isocitrate lyase from Kluyveromyces lactis (strain ATCC 8585 / CBS 2359 / DSM 70799 / NBRC 1267 / NRRL Y-1140 / WM37) (Yeast).